The chain runs to 112 residues: Large ribosomal subunit protein P2A (112 aa).

The tract at residues 83 to 112 (GAAPAAEAKKEEKVEEKEESDDDMGFSLFD) is disordered. Positions 89 to 98 (EAKKEEKVEE) are enriched in basic and acidic residues.

The protein belongs to the eukaryotic ribosomal protein P1/P2 family. In terms of assembly, P1 and P2 exist as dimers at the large ribosomal subunit. Phosphorylated.

In terms of biological role, plays an important role in the elongation step of protein synthesis. This Zea mays (Maize) protein is Large ribosomal subunit protein P2A (RPP2A).